The primary structure comprises 297 residues: Trimeric intracellular cation channel type A (297 aa).

Residues 1 to 18 (MDLISSLSLGELALSFSR) are Lumenal-facing. A helical transmembrane segment spans residues 19–39 (VPLFPVFDLSYFIVSIIYLKY). The Cytoplasmic segment spans residues 40-51 (EPGSVELSRRHP). A helical membrane pass occupies residues 52–72 (VASWLCAMLHCFGSYILADLL). Residues 73-85 (LGEPIIDYFSNSS) are Lumenal-facing. Glycine 74 provides a ligand contact to Ca(2+). Residues 86-106 (SILLASGVWYLIFFCPLDLFY) traverse the membrane as a helical segment. Residues 107 to 143 (KCVCFLPVKLIFVAMKEVVRVRKIAVGIHHAHHYHHG) lie on the Cytoplasmic side of the membrane. 2 residues coordinate a 1,2-diacyl-sn-glycero-3-phospho-(1D-myo-inositol-4,5-bisphosphate): lysine 122 and arginine 126. Residues 144-164 (WFIMIATGWVKGSGVALLSNL) form a helical membrane-spanning segment. Residues 165 to 177 (EQLLRGVWKPETN) lie on the Lumenal side of the membrane. Residues 178–198 (EILHMSFPTKASLYGAILFTL) traverse the membrane as a helical segment. Residues 199-208 (QQTRWLPVSK) lie on the Cytoplasmic side of the membrane. A helical membrane pass occupies residues 209 to 229 (ASLIFVFTMFMVSCKVFLTAT). Over 230–233 (HSHS) the chain is Lumenal. A helical transmembrane segment spans residues 234–254 (SPFDVLEGYICPVLFGATWGG). Residues 255 to 297 (DHHHDNHGAPHGMGLGTQHSGLPAKAKEELSEGFRKKKTKKAD) are Cytoplasmic-facing. The disordered stretch occupies residues 259–297 (DNHGAPHGMGLGTQHSGLPAKAKEELSEGFRKKKTKKAD). Positions 279–288 (KAKEELSEGF) are enriched in basic and acidic residues.

This sequence belongs to the TMEM38 family. Homotrimer; conformation seems to be controled by binding to diacylglycerol (DAG).

It is found in the sarcoplasmic reticulum membrane. Its subcellular location is the nucleus membrane. It carries out the reaction K(+)(in) = K(+)(out). Its activity is regulated as follows. Channel activity is activated by a change of voltage within the sarcoplasmic reticulum lumen and blocked by luminal high Ca(2+) levels. Intracellular monovalent cation channel required for maintenance of rapid intracellular calcium release. Acts as a potassium counter-ion channel that functions in synchronization with calcium release from intracellular stores. Opened by a change of voltage within the sarcoplasmic reticulum lumen. The polypeptide is Trimeric intracellular cation channel type A (Rattus norvegicus (Rat)).